We begin with the raw amino-acid sequence, 295 residues long: Phosphatidylserine decarboxylase proenzyme (295 aa).

Catalysis depends on charge relay system; for autoendoproteolytic cleavage activity residues D113, H169, and S256. S256 functions as the Schiff-base intermediate with substrate; via pyruvic acid; for decarboxylase activity in the catalytic mechanism. S256 carries the pyruvic acid (Ser); by autocatalysis modification.

It belongs to the phosphatidylserine decarboxylase family. PSD-B subfamily. Prokaryotic type II sub-subfamily. In terms of assembly, heterodimer of a large membrane-associated beta subunit and a small pyruvoyl-containing alpha subunit. Requires pyruvate as cofactor. In terms of processing, is synthesized initially as an inactive proenzyme. Formation of the active enzyme involves a self-maturation process in which the active site pyruvoyl group is generated from an internal serine residue via an autocatalytic post-translational modification. Two non-identical subunits are generated from the proenzyme in this reaction, and the pyruvate is formed at the N-terminus of the alpha chain, which is derived from the carboxyl end of the proenzyme. The autoendoproteolytic cleavage occurs by a canonical serine protease mechanism, in which the side chain hydroxyl group of the serine supplies its oxygen atom to form the C-terminus of the beta chain, while the remainder of the serine residue undergoes an oxidative deamination to produce ammonia and the pyruvoyl prosthetic group on the alpha chain. During this reaction, the Ser that is part of the protease active site of the proenzyme becomes the pyruvoyl prosthetic group, which constitutes an essential element of the active site of the mature decarboxylase.

It localises to the cell membrane. It carries out the reaction a 1,2-diacyl-sn-glycero-3-phospho-L-serine + H(+) = a 1,2-diacyl-sn-glycero-3-phosphoethanolamine + CO2. It participates in phospholipid metabolism; phosphatidylethanolamine biosynthesis; phosphatidylethanolamine from CDP-diacylglycerol: step 2/2. Functionally, catalyzes the formation of phosphatidylethanolamine (PtdEtn) from phosphatidylserine (PtdSer). This is Phosphatidylserine decarboxylase proenzyme from Clostridium botulinum (strain ATCC 19397 / Type A).